A 710-amino-acid chain; its full sequence is Polyribonucleotide nucleotidyltransferase (710 aa).

Mg(2+) contacts are provided by D488 and D494. A KH domain is found at 555–614 (PRIETITIPTDKIRDVIGSGGKVIREIVETTGAKVDVNDDGVIKVSSSDGASIKAALDWI). In terms of domain architecture, S1 motif spans 624-692 (GQIYKGKVVK…DRGKVRLSMK (69 aa)).

The protein belongs to the polyribonucleotide nucleotidyltransferase family. Mg(2+) is required as a cofactor.

The protein resides in the cytoplasm. The enzyme catalyses RNA(n+1) + phosphate = RNA(n) + a ribonucleoside 5'-diphosphate. Functionally, involved in mRNA degradation. Catalyzes the phosphorolysis of single-stranded polyribonucleotides processively in the 3'- to 5'-direction. The sequence is that of Polyribonucleotide nucleotidyltransferase from Maricaulis maris (strain MCS10) (Caulobacter maris).